We begin with the raw amino-acid sequence, 1116 residues long: MLMTGSVGDGSEFDWEDQKTFISRDGGLTWRFVHNSSGLYATGDLGNIIVYIPYDPEEDGDFQSEFYYSLDQGRTWNEYELTNAISSVHPYKLINPTPDGSGSKFIFKGTFATTDSETNSITSLKGVEYIIDFSAAFDSRTCEEEDFEDWDLADGKCVNGAKYKYRRRKQDAQCLVKKAFKDLSLDETPCNSCGESDYECSFEFVRDANGLCIPDYNLIAFSNICDKSKDKSVLVEPLQLIKGDECKTPMKIEPVDIPCDEIPEEGSSDREIVTTENKFDFEIKFYQYFDTVADESLVMLNSIGDAYISHDGGQTIKRFDTNGEKIVEVVFNPYFNSSAYLFGSKGNIFSTHDRGHSFMIAKLPEARQLGMPLDFSAKAQDTFIYYGGKNCESILSPECHAVAYLTKDGGETFTEMLDNAIHCEFAGTLFEYPSNEEMVMCQVKKKSSETRSLVSSIDFFQGDNKIIFENIIGYLSTGGYIIVAVPHEDNELRAYVTIDGTEFAEAKFPYGQDVSKQEAFTILGSEKGSIFLHLATNLESGHDFGNLLKSNSNGTSFVTLEHAVNRNTFGYVDFEKVQGLEGIIITNIVSNREKVGENKEDEQLKTKITFNDGSDWNFLKPPKKDSEGKKFPCDSVSLDKCSLHLHGYTERKDIRDTYSSGSALGMMFGVGNVGDKLLPYEECSTFLTTDGGETWTEVKKGPHQWEYGDHGGVLVLVPENAETDSISYSTDFGKTWKDYKFCGDKVLVKDIITVPRDSALRFLLFGEAKNMGSGSFRTYTIDFRNIFERQCEFDITGKKRADFKYSPLGSRTGCLFGHQTEFLRKTDEKCFIGNIPLSEFSRNVKNCSCTRQDFECDYNFYKASDGTCKLVKGLSSANGADICKKEPDLIEYYDSSGYRKIPLSTCKGGLKLDAHLAPHPCPGKEKAFREKYSINTGAYALVFVTILLVIFFAAWFVYDRGIRRNGGFSRFEEIRLGDDGLIENNRTDRVVNIIVRLGLCISLITKSAFQRTKAGVARFSSKLRARFGNRKGPTYSSLLQGQFSDESDGLHEDANDLSSFTSQDSNFEIEQEDAYRPEQEHTSQIDQPATSNIPDALPARSAIHKPDSTAVRNEDE.

The BNR 1 repeat unit spans residues 21-32 (FISRDGGLTWRF). Asn-35 is a glycosylation site (N-linked (GlcNAc...) asparagine). 2 BNR repeats span residues 67–78 (YYSLDQGRTWNE) and 307–318 (YISHDGGQTIKR). N-linked (GlcNAc...) asparagine glycosylation occurs at Asn-336. The stretch at 404 to 415 (YLTKDGGETFTE) is one BNR 4 repeat. N-linked (GlcNAc...) asparagine glycosylation occurs at Asn-553. BNR repeat units lie at residues 607 to 618 (KITFNDGSDWNF), 686 to 697 (FLTTDGGETWTE), and 727 to 738 (SYSTDFGKTWKD). N-linked (GlcNAc...) asparagine glycosylation is present at Asn-846. Residues 934–957 (INTGAYALVFVTILLVIFFAAWFV) form a helical membrane-spanning segment. A glycan (N-linked (GlcNAc...) asparagine) is linked at Asn-985. Residues 1069–1116 (IEQEDAYRPEQEHTSQIDQPATSNIPDALPARSAIHKPDSTAVRNEDE) are disordered. Positions 1073 to 1083 (DAYRPEQEHTS) are enriched in basic and acidic residues. Positions 1084-1093 (QIDQPATSNI) are enriched in polar residues.

The protein resides in the membrane. This is an uncharacterized protein from Saccharomyces cerevisiae (strain ATCC 204508 / S288c) (Baker's yeast).